The chain runs to 432 residues: Adenylosuccinate synthetase (432 aa).

Residues 13 to 19 (GDEGKGK) and 41 to 43 (GHT) contribute to the GTP site. Catalysis depends on aspartate 14, which acts as the Proton acceptor. Mg(2+) contacts are provided by aspartate 14 and glycine 41. IMP-binding positions include 14 to 17 (DEGK), 39 to 42 (NAGH), threonine 130, arginine 144, glutamine 225, threonine 240, and arginine 304. The active-site Proton donor is histidine 42. Residue 300 to 306 (ATTGRRR) participates in substrate binding. GTP-binding positions include arginine 306, 332–334 (KLD), and 415–417 (STG).

Belongs to the adenylosuccinate synthetase family. As to quaternary structure, homodimer. The cofactor is Mg(2+).

Its subcellular location is the cytoplasm. The catalysed reaction is IMP + L-aspartate + GTP = N(6)-(1,2-dicarboxyethyl)-AMP + GDP + phosphate + 2 H(+). Its pathway is purine metabolism; AMP biosynthesis via de novo pathway; AMP from IMP: step 1/2. Its function is as follows. Plays an important role in the de novo pathway of purine nucleotide biosynthesis. Catalyzes the first committed step in the biosynthesis of AMP from IMP. This is Adenylosuccinate synthetase from Salmonella typhi.